The following is a 452-amino-acid chain: FAD transporter (452 aa).

12 helical membrane-spanning segments follow: residues 21–41 (LPNLIGIMTILGFSLADTFFI), 49–69 (LAAISFTFPVTLIISSIAIGV), 96–116 (ALLLTFILIASLSALGSIFIE), 131–151 (LIHDYMMYWYVGAPLLVLLMV), 167–187 (MIMTLAAIINLILDPLLIFGI), 199–219 (AIATLFSWLVALSLSGYLLII), 248–270 (AALMNLINPLANAVIMAMLAHID), 283–303 (LESVLLIVVMALSSSLMPFIA), 324–344 (FILVFQTLLYIPLAFFAQPLA), 357–377 (LSFYILVLPCAYGPLGIVIIF), 392–412 (VINLCRLVLLMLPLAALGSYI), and 417–437 (GLLLALPITNLLMGIACYYLA).

The protein belongs to the multi antimicrobial extrusion (MATE) (TC 2.A.66.1) family.

The protein localises to the cell inner membrane. Its function is as follows. Flavin adenine dinucleotide (FAD) transporter that facilitates export of flavin electron shuttles. This is FAD transporter from Shewanella oneidensis (strain ATCC 700550 / JCM 31522 / CIP 106686 / LMG 19005 / NCIMB 14063 / MR-1).